Consider the following 155-residue polypeptide: NADPH-dependent 7-cyano-7-deazaguanine reductase (155 aa).

Residue Cys-52 is the Thioimide intermediate of the active site. Asp-59 acts as the Proton donor in catalysis. Substrate contacts are provided by residues 74 to 76 (VES) and 93 to 94 (HE).

It belongs to the GTP cyclohydrolase I family. QueF type 1 subfamily.

Its subcellular location is the cytoplasm. The catalysed reaction is 7-aminomethyl-7-carbaguanine + 2 NADP(+) = 7-cyano-7-deazaguanine + 2 NADPH + 3 H(+). Its pathway is tRNA modification; tRNA-queuosine biosynthesis. Catalyzes the NADPH-dependent reduction of 7-cyano-7-deazaguanine (preQ0) to 7-aminomethyl-7-deazaguanine (preQ1). This is NADPH-dependent 7-cyano-7-deazaguanine reductase from Syntrophobacter fumaroxidans (strain DSM 10017 / MPOB).